The sequence spans 395 residues: 1-deoxy-D-xylulose 5-phosphate reductoisomerase (395 aa).

6 residues coordinate NADPH: T10, G11, S12, I13, K37, and N123. K124 contributes to the 1-deoxy-D-xylulose 5-phosphate binding site. E125 lines the NADPH pocket. D149 provides a ligand contact to Mn(2+). Residues S150, E151, S185, and H208 each coordinate 1-deoxy-D-xylulose 5-phosphate. E151 contributes to the Mn(2+) binding site. NADPH is bound at residue G214. 1-deoxy-D-xylulose 5-phosphate contacts are provided by S221, N226, K227, and E230. E230 is a Mn(2+) binding site.

Belongs to the DXR family. Mg(2+) is required as a cofactor. Mn(2+) serves as cofactor.

The enzyme catalyses 2-C-methyl-D-erythritol 4-phosphate + NADP(+) = 1-deoxy-D-xylulose 5-phosphate + NADPH + H(+). It functions in the pathway isoprenoid biosynthesis; isopentenyl diphosphate biosynthesis via DXP pathway; isopentenyl diphosphate from 1-deoxy-D-xylulose 5-phosphate: step 1/6. Its function is as follows. Catalyzes the NADPH-dependent rearrangement and reduction of 1-deoxy-D-xylulose-5-phosphate (DXP) to 2-C-methyl-D-erythritol 4-phosphate (MEP). This Shewanella loihica (strain ATCC BAA-1088 / PV-4) protein is 1-deoxy-D-xylulose 5-phosphate reductoisomerase.